We begin with the raw amino-acid sequence, 120 residues long: Guanidine hydrolase-activating protein A (120 aa).

Residues His2, Glu3, and Glu41 each coordinate Ni(2+). Cys74, Cys77, Cys91, and Cys94 together coordinate Zn(2+).

Belongs to the HypA/HybF family.

Its function is as follows. Involved in the maturation of the nickel-dependent guanidine hydrolase GdmH. Required for nickel insertion into the metal center of GdmH. Seems to be required only for GdmH activation and not for activity. In Synechocystis sp. (strain ATCC 27184 / PCC 6803 / Kazusa), this protein is Guanidine hydrolase-activating protein A.